Reading from the N-terminus, the 920-residue chain is Probable transport protein MmpL7 (920 aa).

A run of 12 helical transmembrane segments spans residues 44-64, 210-230, 241-261, 271-291, 311-331, 344-364, 389-409, 761-781, 790-810, 822-842, 864-884, and 888-908; these read LLVV…LTFT, ITAW…VLLL, AIVL…AAVV, VFSW…ATML, LPAF…LLLA, LGVF…IALA, SASA…IIGM, LIHD…LASM, AVGV…IALW, VPLV…VAGI, GAVA…VLVS, and FSVL…LITV.

It belongs to the resistance-nodulation-cell division (RND) (TC 2.A.6) family. MmpL subfamily.

Its subcellular location is the cell membrane. In Mycobacterium bovis (strain ATCC BAA-935 / AF2122/97), this protein is Probable transport protein MmpL7 (mmpL7).